A 212-amino-acid polypeptide reads, in one-letter code: Thymidylate kinase (212 aa).

An ATP-binding site is contributed by 10–17 (GPDGAGKS).

This sequence belongs to the thymidylate kinase family.

It catalyses the reaction dTMP + ATP = dTDP + ADP. Functionally, phosphorylation of dTMP to form dTDP in both de novo and salvage pathways of dTTP synthesis. This Lactobacillus helveticus (strain DPC 4571) protein is Thymidylate kinase.